The chain runs to 236 residues: GCN5-related N-acetyltransferase 8 (236 aa).

Residues 96–235 enclose the N-acetyltransferase domain; sequence ATITSSPSPD…DALEAFDQVN (140 aa). Acetyl-CoA contacts are provided by residues 161 to 163, 169 to 174, 200 to 202, and Tyr207; these read IFV, RKGFGS, and NVN. The active-site Proton donor is the Tyr207.

Belongs to the acetyltransferase family. GNAT subfamily. As to quaternary structure, oligomer. As to expression, expressed throughout the plant.

The protein resides in the cytoplasm. It is found in the nucleus. The enzyme catalyses an N-terminal L-alpha-aminoacyl-[protein] + acetyl-CoA = N-terminal N(alpha)-acetyl-L-alpha-aminoacyl-[protein] + CoA + H(+). It catalyses the reaction L-lysyl-[protein] + acetyl-CoA = N(6)-acetyl-L-lysyl-[protein] + CoA + H(+). In terms of biological role, probable protein acetyltransferase with dual specificity triggering both N-alpha-acetylation (NTA) and epsilon-lysine acetylation (KA). The polypeptide is GCN5-related N-acetyltransferase 8 (Arabidopsis thaliana (Mouse-ear cress)).